We begin with the raw amino-acid sequence, 204 residues long: Tumor necrosis factor receptor superfamily member 26 (204 aa).

The N-terminal stretch at 1-19 (MTRLRLLLLLGLLLRVAVC) is a signal peptide. The Extracellular segment spans residues 20–164 (SVNTITLCKI…SQCFCFSKPL (145 aa)). Cystine bridges form between C27–C38, C39–C52, C42–C61, C64–C79, C82–C95, C85–C103, C105–C120, C123–C135, and C126–C143. 3 TNFR-Cys repeats span residues 27–61 (CKIG…KSEC), 63–103 (PCDS…DRVC), and 104–143 (QCKQ…DTVC). The N-linked (GlcNAc...) asparagine glycan is linked to N57. A glycan (N-linked (GlcNAc...) asparagine) is linked at N136. A helical membrane pass occupies residues 165-185 (GIVVIIAAFIIIIGAVIILIL). The Cytoplasmic segment spans residues 186–204 (KIICYCKRGENIQLSSTML).

As to expression, expressed in thymus and spleen. Detectable levels in lung.

The protein localises to the membrane. The polypeptide is Tumor necrosis factor receptor superfamily member 26 (Tnfrsf26) (Mus musculus (Mouse)).